The primary structure comprises 1141 residues: Isoleucine--tRNA ligase, cytoplasmic (1141 aa).

The 'HIGH' region motif lies at 50–60 (PFATGLPHYGH). Residues 601–605 (KMSKS) carry the 'KMSKS' region motif. Residue lysine 604 coordinates ATP.

The protein belongs to the class-I aminoacyl-tRNA synthetase family.

Its subcellular location is the cytoplasm. It carries out the reaction tRNA(Ile) + L-isoleucine + ATP = L-isoleucyl-tRNA(Ile) + AMP + diphosphate. The sequence is that of Isoleucine--tRNA ligase, cytoplasmic from Caenorhabditis elegans.